A 300-amino-acid chain; its full sequence is 1D-myo-inositol 2-acetamido-2-deoxy-alpha-D-glucopyranoside deacetylase (300 aa).

Zn(2+) contacts are provided by His13, Asp16, and His147.

It belongs to the MshB deacetylase family. Requires Zn(2+) as cofactor.

The enzyme catalyses 1D-myo-inositol 2-acetamido-2-deoxy-alpha-D-glucopyranoside + H2O = 1D-myo-inositol 2-amino-2-deoxy-alpha-D-glucopyranoside + acetate. Its function is as follows. Catalyzes the deacetylation of 1D-myo-inositol 2-acetamido-2-deoxy-alpha-D-glucopyranoside (GlcNAc-Ins) in the mycothiol biosynthesis pathway. The sequence is that of 1D-myo-inositol 2-acetamido-2-deoxy-alpha-D-glucopyranoside deacetylase from Mycolicibacterium paratuberculosis (strain ATCC BAA-968 / K-10) (Mycobacterium paratuberculosis).